The sequence spans 443 residues: MFLAQEIIRKKRNGLALSTEEIQFFVKGITTNAVSEGQIAALGMAVYFNDMNMDERIALTTAMRDSGTVLNWQSLGLNGPVIDKHSTGGVGDVISLMLGPMAAACGGYVPMISGRGLGHTGGTLDKFDAIPGYQTEPSSELFRKVVKDVGVAIIGQTGDLVPADKRFYSIRDNTATVESISLITASILSKKLACSLDALAMDVKVGSGAFMPTYEASEELARSIAAVANGAGTKTTALLTDMNQVLASCAGNAVEVKEAIDFLTGAYRNPRLYAVTMGLCAEMLLLGGLASDEADARAKLNRVLDNGRAAEIFGKMVSGLGGPVDFVENYSKYLPQSQIIRPVFADTQGYAYSMDTRELGLAVVTLGGGRRKPGDALDYSVGLTQVCALGDKIDASTPIAVIHAQSEEAFAQAEEAVKKAIHIDEVAPEKTPEIYAYIRASDL.

The protein belongs to the thymidine/pyrimidine-nucleoside phosphorylase family. As to quaternary structure, homodimer.

It catalyses the reaction thymidine + phosphate = 2-deoxy-alpha-D-ribose 1-phosphate + thymine. It participates in pyrimidine metabolism; dTMP biosynthesis via salvage pathway; dTMP from thymine: step 1/2. The enzymes which catalyze the reversible phosphorolysis of pyrimidine nucleosides are involved in the degradation of these compounds and in their utilization as carbon and energy sources, or in the rescue of pyrimidine bases for nucleotide synthesis. The sequence is that of Thymidine phosphorylase from Shewanella sp. (strain ANA-3).